The primary structure comprises 393 residues: Probable chromate transport protein (393 aa).

10 helical membrane-spanning segments follow: residues 22–42 (YFLK…GYMH), 90–110 (ALVG…LGWA), 119–139 (WMQA…AISA), 146–166 (TVGT…TTIV), 201–221 (FIGL…TSLL), 231–251 (AGAF…GGVV), 261–281 (QFLD…ITTG), 282–302 (FIGF…AMFI), 327–347 (FVNG…VVLG), and 370–390 (LGKK…GVIF).

It belongs to the chromate ion transporter (CHR) (TC 2.A.51) family.

The protein localises to the cell membrane. May function in the active transport of chromate into the cell under sulfur-deficient conditions. The sequence is that of Probable chromate transport protein (srpC) from Synechococcus elongatus (strain ATCC 33912 / PCC 7942 / FACHB-805) (Anacystis nidulans R2).